A 955-amino-acid polypeptide reads, in one-letter code: Coiled-coil domain-containing protein 146 (955 aa).

The span at 1 to 17 (MEDSSTDTEKEEEEEKD) shows a compositional bias: acidic residues. The segment at 1–22 (MEDSSTDTEKEEEEEKDEKDQE) is disordered. Coiled coils occupy residues 114-141 (EAFS…KERE), 169-321 (GEME…AREN), 400-461 (STLS…LLRM), 534-640 (KAHQ…RNES), and 667-832 (NGEI…MKQA).

In terms of assembly, interacts with CCDC38 and CCDC42. Interacts with intraflagellar transport proteins IFT20 and IFT88. As to quaternary structure, (Microbial infection) Interacts with Chlamydia trachomatis incM/YT288. In host cells infected with C.trachomatis incM, CCDC146 is recruited to the periphery of the pathogen-containing vacuole but recruitment is not dependent on incM. As to expression, widely expressed.

Its subcellular location is the cytoplasm. The protein localises to the cytoskeleton. It is found in the microtubule organizing center. The protein resides in the centrosome. It localises to the centriole. Its subcellular location is the flagellum axoneme. The protein localises to the cilium basal body. It is found in the midbody. In terms of biological role, essential for sperm flagellum biogenesis and male fertility. This Homo sapiens (Human) protein is Coiled-coil domain-containing protein 146 (CCDC146).